The sequence spans 311 residues: MKKGYIFILLTAIFYSTQEISGKMLAQKGAMDPFQVMMIVFLIGAIILLPMAVKDIKVKKLKLTGNDLGYLALCGILAVSISMSMLQFAVTYTKASTAAVLFCTNAVFTIPFAYFILKEKIKGITIVSIIVSLIGVVIIFNPAKVMEGIGGSRDLIGICFALVAAVVWSLYTVISKKRIEIYGGYVFNCISFFFGVIALLILLVVTGRPIFSGITLNNILVLLYMGIFIKAVGYICYLGAIKETSAVTASTVFLIKPALATVLAILILGESIEVNVVIGIVFIIIGSIINYSSNKKANDLKKVANTSSAES.

The next 10 membrane-spanning stretches (helical) occupy residues 6–26 (IFILLTAIFYSTQEISGKMLA), 33–53 (PFQVMMIVFLIGAIILLPMAV), 70–90 (YLALCGILAVSISMSMLQFAV), 97–117 (TAAVLFCTNAVFTIPFAYFIL), 123–143 (GITIVSIIVSLIGVVIIFNPA), 155–175 (LIGICFALVAAVVWSLYTVIS), 185–205 (YVFNCISFFFGVIALLILLVV), 219–239 (ILVLLYMGIFIKAVGYICYLG), 244–264 (TSAVTASTVFLIKPALATVLA), and 265–285 (ILILGESIEVNVVIGIVFIII). EamA domains follow at residues 12–141 (AIFY…IIFN) and 166–292 (VVWS…INYS).

Belongs to the EamA transporter family.

The protein localises to the cell membrane. This is an uncharacterized protein from Clostridium kluyveri (strain ATCC 8527 / DSM 555 / NBRC 12016 / NCIMB 10680 / K1).